The primary structure comprises 348 residues: Methylthioribose-1-phosphate isomerase (348 aa).

Residues 53–55 (RGA), Arg93, and Gln197 each bind substrate. The active-site Proton donor is the Asp238. 248-249 (NK) is a binding site for substrate.

Belongs to the eIF-2B alpha/beta/delta subunits family. MtnA subfamily.

It catalyses the reaction 5-(methylsulfanyl)-alpha-D-ribose 1-phosphate = 5-(methylsulfanyl)-D-ribulose 1-phosphate. The protein operates within amino-acid biosynthesis; L-methionine biosynthesis via salvage pathway; L-methionine from S-methyl-5-thio-alpha-D-ribose 1-phosphate: step 1/6. Functionally, catalyzes the interconversion of methylthioribose-1-phosphate (MTR-1-P) into methylthioribulose-1-phosphate (MTRu-1-P). The protein is Methylthioribose-1-phosphate isomerase of Gloeobacter violaceus (strain ATCC 29082 / PCC 7421).